We begin with the raw amino-acid sequence, 360 residues long: MTSAALAPSSAAPAGAGAAPRSRAAVRRWLFAMAALVIAMVAVGGATRLTGSGLSITEWKPVTGAIPPLSAEAWTEEFAKYRATPQYDILNRGMSLAEFQVIYAWEWGHRFLGRLIGFAFFLPLGWFWWTGRLDRRLGLGLLGLGVLGGLQGAVGWIMVASGLQPGMTAVAPIKLAAHLTLASAIFAGLVWLAAGLDRAPDEPLPRRLRLTALALPLLMLVQIALGGLVAGSKAGLTYNTWPLMDGAFIPPLSGLFAVTPWIENFVDNVALVQLNHRLAAYGLLAVAALHWLDLFRTRPGSRAAKRAGAILGLVTAQAALGITTLLLAVPLWAGLAHQVTAMLVLGMAAVHARIATLSRA.

The next 9 membrane-spanning stretches (helical) occupy residues 29 to 49, 111 to 131, 139 to 159, 175 to 195, 210 to 230, 242 to 262, 269 to 289, 309 to 329, and 330 to 350; these read WLFA…ATRL, FLGR…WWTG, LGLL…WIMV, LAAH…LAAG, LTAL…GLVA, PLMD…TPWI, VALV…VAAL, AILG…LLAV, and PLWA…MAAV. His-276 serves as a coordination point for heme. His-337 provides a ligand contact to heme.

Belongs to the COX15/CtaA family. Type 2 subfamily. As to quaternary structure, interacts with CtaB. Heme b is required as a cofactor.

It localises to the cell membrane. It carries out the reaction Fe(II)-heme o + 2 A + H2O = Fe(II)-heme a + 2 AH2. The protein operates within porphyrin-containing compound metabolism; heme A biosynthesis; heme A from heme O: step 1/1. Its function is as follows. Catalyzes the conversion of heme O to heme A by two successive hydroxylations of the methyl group at C8. The first hydroxylation forms heme I, the second hydroxylation results in an unstable dihydroxymethyl group, which spontaneously dehydrates, resulting in the formyl group of heme A. The protein is Heme A synthase of Methylobacterium nodulans (strain LMG 21967 / CNCM I-2342 / ORS 2060).